We begin with the raw amino-acid sequence, 218 residues long: Pyridoxal 5'-phosphate synthase subunit PdxT (218 aa).

54-56 (GES) is a binding site for L-glutamine. Catalysis depends on C86, which acts as the Nucleophile. L-glutamine contacts are provided by residues R120 and 149 to 150 (IR). Residues H197 and E199 each act as charge relay system in the active site.

This sequence belongs to the glutaminase PdxT/SNO family. In the presence of PdxS, forms a dodecamer of heterodimers. Only shows activity in the heterodimer.

The catalysed reaction is aldehydo-D-ribose 5-phosphate + D-glyceraldehyde 3-phosphate + L-glutamine = pyridoxal 5'-phosphate + L-glutamate + phosphate + 3 H2O + H(+). It carries out the reaction L-glutamine + H2O = L-glutamate + NH4(+). It participates in cofactor biosynthesis; pyridoxal 5'-phosphate biosynthesis. Functionally, catalyzes the hydrolysis of glutamine to glutamate and ammonia as part of the biosynthesis of pyridoxal 5'-phosphate. The resulting ammonia molecule is channeled to the active site of PdxS. The chain is Pyridoxal 5'-phosphate synthase subunit PdxT from Saccharopolyspora erythraea (strain ATCC 11635 / DSM 40517 / JCM 4748 / NBRC 13426 / NCIMB 8594 / NRRL 2338).